The following is a 104-amino-acid chain: Type VII secretion system extracellular protein B (104 aa).

This sequence belongs to the WXG100 family. As to quaternary structure, homodimer. When mixed with EsxA does not form heterodimers. Forms heterodimers with EsxD.

It is found in the secreted. Functionally, virulence factor that is important for the establishment of infection in the host. EsxB is required for EsxA synthesis as well as secretion. Mediates together with EsxA the release of S.aureus from the host cell. Also inhibits host cytokine production and thus modulates dendritic cell-mediated immunity. This is Type VII secretion system extracellular protein B from Staphylococcus aureus (strain USA300).